A 650-amino-acid polypeptide reads, in one-letter code: MNNLKYLKLLAKEFPTIEQAANKIISLTSLSVLPKGTEYFLSDLHGQYDSFNRIIKSASGNTRIKIDLEFKDKLSESRKNQLANLIYDPKTIINITKENDEYTETWIRDTIFYLIRIAKRVASKYSRQKVRNQTPFYYRDLIDEMLNIQYESLNKKEYFNQLLDSIIKIEVSENFIITLCELIQDLNIDWLHIVGDIFDRGKRPDIIMDTLIAKKDVDIQYGNHDVTWIGAYLGSYVNACNVVRNAISYNNFQSLEDGYGINLRLLSTLADESYYDDPCERFKVRILDDNKHSETDLLHAARMHKAISIIQFKLENQLFKRNPEFEQLDRLYLERIDFKNGIYKDANGKAHALLDIKFPTVDPDNPLELTPSEQEVVECISKSFRTSHRLKEHMDFLFSYGSVYKIANSNLLFHGCIPMNKDGSFEEFTYQSNTYSGKSLLDFFEGIINSARNMDDNDPDRQTALDFFWYMWCGPKSPMFGKSKISTFENFFITDKDVRKEVSNPYFSLSKIEKYADKIFEEFNMNPETSHIINGHVPVKSINGEKPVSANGKTYVIDGGISEAYQKKTGIAGYTLTFNSHHLAIAKHKNFQVMESVHGAYTPEVTITEEFPKRMLIKDTDEGEEILELIEDLESLIDAYRSGTIQQNSN.

This sequence belongs to the FBPase class 3 family. Mn(2+) is required as a cofactor.

The enzyme catalyses beta-D-fructose 1,6-bisphosphate + H2O = beta-D-fructose 6-phosphate + phosphate. Its pathway is carbohydrate biosynthesis; gluconeogenesis. This Finegoldia magna (strain ATCC 29328 / DSM 20472 / WAL 2508) (Peptostreptococcus magnus) protein is Fructose-1,6-bisphosphatase class 3.